The sequence spans 205 residues: Holliday junction branch migration complex subunit RuvA (205 aa).

The domain I stretch occupies residues 1-64; the sequence is MIGKLKGVVD…EDQIRLFGFS (64 aa). The segment at 65–143 is domain II; sequence SAAERDWFRL…GFSASEPLAA (79 aa). Residues 144-152 form a flexible linker region; sequence QLGGGGVAS. Residues 153–205 form a domain III region; sequence AQGGAAADAVSALVNLGYGVPQANAAIAAALRGAGEGAKTEVLIRLGLKELAK.

It belongs to the RuvA family. As to quaternary structure, homotetramer. Forms an RuvA(8)-RuvB(12)-Holliday junction (HJ) complex. HJ DNA is sandwiched between 2 RuvA tetramers; dsDNA enters through RuvA and exits via RuvB. An RuvB hexamer assembles on each DNA strand where it exits the tetramer. Each RuvB hexamer is contacted by two RuvA subunits (via domain III) on 2 adjacent RuvB subunits; this complex drives branch migration. In the full resolvosome a probable DNA-RuvA(4)-RuvB(12)-RuvC(2) complex forms which resolves the HJ.

Its subcellular location is the cytoplasm. Functionally, the RuvA-RuvB-RuvC complex processes Holliday junction (HJ) DNA during genetic recombination and DNA repair, while the RuvA-RuvB complex plays an important role in the rescue of blocked DNA replication forks via replication fork reversal (RFR). RuvA specifically binds to HJ cruciform DNA, conferring on it an open structure. The RuvB hexamer acts as an ATP-dependent pump, pulling dsDNA into and through the RuvAB complex. HJ branch migration allows RuvC to scan DNA until it finds its consensus sequence, where it cleaves and resolves the cruciform DNA. The protein is Holliday junction branch migration complex subunit RuvA of Xanthobacter autotrophicus (strain ATCC BAA-1158 / Py2).